The primary structure comprises 135 residues: Ribosome-binding factor A (135 aa).

The tract at residues 115–135 (VNEDKRKQQDSGREEDQAGEE) is disordered. The span at 116–135 (NEDKRKQQDSGREEDQAGEE) shows a compositional bias: basic and acidic residues.

Belongs to the RbfA family. As to quaternary structure, monomer. Binds 30S ribosomal subunits, but not 50S ribosomal subunits or 70S ribosomes.

Its subcellular location is the cytoplasm. One of several proteins that assist in the late maturation steps of the functional core of the 30S ribosomal subunit. Associates with free 30S ribosomal subunits (but not with 30S subunits that are part of 70S ribosomes or polysomes). Required for efficient processing of 16S rRNA. May interact with the 5'-terminal helix region of 16S rRNA. In Vibrio campbellii (strain ATCC BAA-1116), this protein is Ribosome-binding factor A.